Here is a 421-residue protein sequence, read N- to C-terminus: Acetylglutamate kinase (421 aa).

An acetylglutamate kinase region spans residues 1–252; it reads MASAKEISQY…PLESSVSITR (252 aa). Residues 59–60, arginine 81, and asparagine 170 each bind substrate; that span reads AG. Residues 274–420 form the N-acetyltransferase domain; the sequence is ERVIRATTWK…HCTQHPPTLI (147 aa).

The protein in the N-terminal section; belongs to the acetylglutamate kinase family. ArgB subfamily.

It localises to the cytoplasm. The enzyme catalyses N-acetyl-L-glutamate + ATP = N-acetyl-L-glutamyl 5-phosphate + ADP. The protein operates within amino-acid biosynthesis; L-arginine biosynthesis; N(2)-acetyl-L-ornithine from L-glutamate: step 2/4. This chain is Acetylglutamate kinase (argB), found in Xylella fastidiosa (strain Temecula1 / ATCC 700964).